Here is a 98-residue protein sequence, read N- to C-terminus: Cell cycle protein GpsB (98 aa).

A coiled-coil region spans residues L34–T71.

The protein belongs to the GpsB family. In terms of assembly, forms polymers through the coiled coil domains. Interacts with PBP1, MreC and EzrA.

Its subcellular location is the cytoplasm. Its function is as follows. Divisome component that associates with the complex late in its assembly, after the Z-ring is formed, and is dependent on DivIC and PBP2B for its recruitment to the divisome. Together with EzrA, is a key component of the system that regulates PBP1 localization during cell cycle progression. Its main role could be the removal of PBP1 from the cell pole after pole maturation is completed. Also contributes to the recruitment of PBP1 to the division complex. Not essential for septum formation. The chain is Cell cycle protein GpsB from Geobacillus thermodenitrificans (strain NG80-2).